A 104-amino-acid chain; its full sequence is MAAKIRRDDEVIVLTGKDKGKRGKVKNVLSSGKAIVEGINLIKKHQKPVPAMNQPGGIVEKEAAIDLSNLAIFNAAASKADRVGFKIEDGKKVRVFKSNGETIK.

The protein belongs to the universal ribosomal protein uL24 family. Part of the 50S ribosomal subunit.

In terms of biological role, one of two assembly initiator proteins, it binds directly to the 5'-end of the 23S rRNA, where it nucleates assembly of the 50S subunit. One of the proteins that surrounds the polypeptide exit tunnel on the outside of the subunit. This chain is Large ribosomal subunit protein uL24, found in Sodalis glossinidius (strain morsitans).